A 203-amino-acid chain; its full sequence is Peptide deformylase (203 aa).

Residues C121 and H163 each contribute to the Fe cation site. The active site involves E164. H167 is a Fe cation binding site.

Belongs to the polypeptide deformylase family. It depends on Fe(2+) as a cofactor.

The catalysed reaction is N-terminal N-formyl-L-methionyl-[peptide] + H2O = N-terminal L-methionyl-[peptide] + formate. In terms of biological role, removes the formyl group from the N-terminal Met of newly synthesized proteins. Requires at least a dipeptide for an efficient rate of reaction. N-terminal L-methionine is a prerequisite for activity but the enzyme has broad specificity at other positions. The sequence is that of Peptide deformylase from Prochlorococcus marinus (strain MIT 9515).